A 185-amino-acid chain; its full sequence is Ribosome-recycling factor (185 aa).

It belongs to the RRF family.

It localises to the cytoplasm. Functionally, responsible for the release of ribosomes from messenger RNA at the termination of protein biosynthesis. May increase the efficiency of translation by recycling ribosomes from one round of translation to another. This chain is Ribosome-recycling factor, found in Exiguobacterium sibiricum (strain DSM 17290 / CCUG 55495 / CIP 109462 / JCM 13490 / 255-15).